Here is a 53-residue protein sequence, read N- to C-terminus: UPF0391 membrane protein PA5482 (53 aa).

Helical transmembrane passes span W4–A24 and G29–G49.

The protein belongs to the UPF0391 family.

It localises to the cell membrane. This Pseudomonas aeruginosa (strain ATCC 15692 / DSM 22644 / CIP 104116 / JCM 14847 / LMG 12228 / 1C / PRS 101 / PAO1) protein is UPF0391 membrane protein PA5482.